A 238-amino-acid chain; its full sequence is NAD(P)H-hydrate epimerase (238 aa).

In terms of domain architecture, YjeF N-terminal spans 11–217; the sequence is AAALDKDLMS…EIHQKYNLQL (207 aa). (6S)-NADPHX is bound at residue 61-65; that stretch reads NNGGD. Residues asparagine 62 and aspartate 123 each coordinate K(+). Residues 127–133 and aspartate 156 each bind (6S)-NADPHX; that span reads GFSFTGS. Serine 159 contributes to the K(+) binding site.

Belongs to the NnrE/AIBP family. K(+) is required as a cofactor.

It localises to the cytoplasm. Its subcellular location is the mitochondrion. The catalysed reaction is (6R)-NADHX = (6S)-NADHX. It catalyses the reaction (6R)-NADPHX = (6S)-NADPHX. In terms of biological role, catalyzes the epimerization of the S- and R-forms of NAD(P)HX, a damaged form of NAD(P)H that is a result of enzymatic or heat-dependent hydration. This is a prerequisite for the S-specific NAD(P)H-hydrate dehydratase to allow the repair of both epimers of NAD(P)HX. This chain is NAD(P)H-hydrate epimerase, found in Sclerotinia sclerotiorum (strain ATCC 18683 / 1980 / Ss-1) (White mold).